We begin with the raw amino-acid sequence, 495 residues long: UDP-N-acetylmuramoyl-L-alanyl-D-glutamate--2,6-diaminopimelate ligase (495 aa).

Residue Ser-29 coordinates UDP-N-acetyl-alpha-D-muramoyl-L-alanyl-D-glutamate. Gly-111 to Ser-117 is an ATP binding site. UDP-N-acetyl-alpha-D-muramoyl-L-alanyl-D-glutamate is bound by residues Thr-153–Thr-154, Ser-180, Gln-186, and Arg-188. Residue Lys-220 is modified to N6-carboxylysine. Meso-2,6-diaminopimelate is bound by residues Arg-384, Asp-408 to Arg-411, Gly-459, and Glu-463. The short motif at Asp-408–Arg-411 is the Meso-diaminopimelate recognition motif element.

It belongs to the MurCDEF family. MurE subfamily. Requires Mg(2+) as cofactor. Carboxylation is probably crucial for Mg(2+) binding and, consequently, for the gamma-phosphate positioning of ATP.

The protein resides in the cytoplasm. It catalyses the reaction UDP-N-acetyl-alpha-D-muramoyl-L-alanyl-D-glutamate + meso-2,6-diaminopimelate + ATP = UDP-N-acetyl-alpha-D-muramoyl-L-alanyl-gamma-D-glutamyl-meso-2,6-diaminopimelate + ADP + phosphate + H(+). Its pathway is cell wall biogenesis; peptidoglycan biosynthesis. Catalyzes the addition of meso-diaminopimelic acid to the nucleotide precursor UDP-N-acetylmuramoyl-L-alanyl-D-glutamate (UMAG) in the biosynthesis of bacterial cell-wall peptidoglycan. This chain is UDP-N-acetylmuramoyl-L-alanyl-D-glutamate--2,6-diaminopimelate ligase, found in Xylella fastidiosa (strain Temecula1 / ATCC 700964).